Reading from the N-terminus, the 288-residue chain is 2-hydroxy-6-oxononadienedioate/2-hydroxy-6-oxononatrienedioate hydrolase (288 aa).

The 236-residue stretch at 38 to 273 folds into the AB hydrolase-1 domain; it reads VVLLHGSGPG…DCGHWAQWEH (236 aa). His-267 functions as the Proton acceptor in the catalytic mechanism.

Belongs to the AB hydrolase superfamily. MhpC family. In terms of assembly, homodimer.

The enzyme catalyses (2Z,4E)-2-hydroxy-6-oxonona-2,4-dienedioate + H2O = (2Z)-2-hydroxypenta-2,4-dienoate + succinate + H(+). It carries out the reaction (2Z,4E,7E)-2-hydroxy-6-oxonona-2,4,7-trienedioate + H2O = (2Z)-2-hydroxypenta-2,4-dienoate + fumarate + H(+). It functions in the pathway aromatic compound metabolism; 3-phenylpropanoate degradation. In terms of biological role, catalyzes the cleavage of the C5-C6 bond of 2-hydroxy-6-oxononadienedioate and 2-hydroxy-6-oxononatrienedioate, a dienol ring fission product of the bacterial meta-cleavage pathway for degradation of phenylpropionic acid. The chain is 2-hydroxy-6-oxononadienedioate/2-hydroxy-6-oxononatrienedioate hydrolase from Escherichia coli O139:H28 (strain E24377A / ETEC).